The following is a 310-amino-acid chain: NADH-cytochrome b5 reductase 1 (310 aa).

A helical transmembrane segment spans residues 30–50; it reads WVPFAVALAAGFVAWKLSVGG. One can recognise an FAD-binding FR-type domain in the interval 61-166; that stretch reads NEFQNFVLKE…RGPKGAMVYT (106 aa). FAD is bound by residues 146–160 and 172–209; these read TTLK…RGPK and HIGM…QVDL.

The protein belongs to the flavoprotein pyridine nucleotide cytochrome reductase family. In terms of assembly, monomer. Component of the 2-(3-amino-3-carboxypropyl)histidine synthase complex composed of dph1, dph2, dph3 and a NADH-dependent reductase, predominantly cbr1. Requires FAD as cofactor.

It localises to the mitochondrion outer membrane. The catalysed reaction is 2 Fe(III)-[cytochrome b5] + NADH = 2 Fe(II)-[cytochrome b5] + NAD(+) + H(+). It carries out the reaction 2 Fe(3+)-[Dph3] + NADH = 2 Fe(2+)-[Dph3] + NAD(+) + H(+). It participates in protein modification; peptidyl-diphthamide biosynthesis. Functionally, NADH-dependent reductase for dph3 and cytochrome b5. Required for the first step of diphthamide biosynthesis, a post-translational modification of histidine which occurs in elongation factor 2. Dph1 and dph2 transfer a 3-amino-3-carboxypropyl (ACP) group from S-adenosyl-L-methionine (SAM) to a histidine residue, the reaction is assisted by a reduction system comprising dph3 and a NADH-dependent reductase, predominantly cbr1. By reducing dph3, also involved in the formation of the tRNA wobble base modification mcm5s 2U (5-methoxycarbonylmethyl-2-thiouridine), mediated by the elongator complex. The cytochrome b5/NADH cytochrome b5 reductase electron transfer system supports the catalytic activity of several sterol biosynthetic enzymes. The polypeptide is NADH-cytochrome b5 reductase 1 (cbr1) (Emericella nidulans (strain FGSC A4 / ATCC 38163 / CBS 112.46 / NRRL 194 / M139) (Aspergillus nidulans)).